The sequence spans 360 residues: Membrane-bound lytic murein transglycosylase C (360 aa).

The signal sequence occupies residues 1–16 (MKKYLALALIAPLLVS). The N-palmitoyl cysteine moiety is linked to residue C17. C17 carries the S-diacylglycerol cysteine lipid modification.

Belongs to the transglycosylase Slt family.

It localises to the cell outer membrane. The catalysed reaction is Exolytic cleavage of the (1-&gt;4)-beta-glycosidic linkage between N-acetylmuramic acid (MurNAc) and N-acetylglucosamine (GlcNAc) residues in peptidoglycan, from either the reducing or the non-reducing ends of the peptidoglycan chains, with concomitant formation of a 1,6-anhydrobond in the MurNAc residue.. In terms of biological role, murein-degrading enzyme. May play a role in recycling of muropeptides during cell elongation and/or cell division. This Klebsiella pneumoniae (strain 342) protein is Membrane-bound lytic murein transglycosylase C.